The following is a 295-amino-acid chain: GTPase Era (295 aa).

Positions 5–172 (YCGYAAIIGR…EQAVHQLMPE (168 aa)) constitute an Era-type G domain. Positions 13 to 20 (GRPNVGKS) are G1. 13 to 20 (GRPNVGKS) contacts GTP. The G2 stretch occupies residues 39–43 (QTTRY). The G3 stretch occupies residues 60–63 (DTPG). GTP is bound by residues 60–64 (DTPGL) and 121–124 (NKVD). A G4 region spans residues 121–124 (NKVD). The segment at 151–153 (LSA) is G5. In terms of domain architecture, KH type-2 spans 203 to 279 (LGQEIPYSLA…FLQLWVKVKS (77 aa)).

It belongs to the TRAFAC class TrmE-Era-EngA-EngB-Septin-like GTPase superfamily. Era GTPase family. In terms of assembly, monomer.

The protein localises to the cytoplasm. Its subcellular location is the cell inner membrane. Its function is as follows. An essential GTPase that binds both GDP and GTP, with rapid nucleotide exchange. Plays a role in 16S rRNA processing and 30S ribosomal subunit biogenesis and possibly also in cell cycle regulation and energy metabolism. This is GTPase Era from Coxiella burnetii (strain CbuK_Q154) (Coxiella burnetii (strain Q154)).